We begin with the raw amino-acid sequence, 772 residues long: General transcription and DNA repair factor IIH helicase subunit XPD (772 aa).

The 277-residue stretch at D7 to E283 folds into the Helicase ATP-binding domain. Residue M42–T49 coordinates ATP. [4Fe-4S] cluster is bound by residues C115, C133, C154, and C189. The short motif at D233 to H236 is the DEAH box element.

Belongs to the helicase family. RAD3/XPD subfamily. In terms of assembly, component of the 7-subunit TFIIH core complex composed of XPB/ptr8, XPD/rad15, ssl1, tfb1, tfb2, tfb4 and tfb5, which is active in NER. The core complex associates with the 3-subunit CTD-kinase module TFIIK composed of mcs2/cyclin H, mcs6/cdk7 and pmh1/tfb3 to form the 10-subunit holoenzyme (holo-TFIIH) active in transcription. [4Fe-4S] cluster serves as cofactor.

It localises to the nucleus. It carries out the reaction Couples ATP hydrolysis with the unwinding of duplex DNA at the replication fork by translocating in the 5'-3' direction. This creates two antiparallel DNA single strands (ssDNA). The leading ssDNA polymer is the template for DNA polymerase III holoenzyme which synthesizes a continuous strand.. The enzyme catalyses ATP + H2O = ADP + phosphate + H(+). ATP-dependent 5'-3' DNA helicase, component of the general transcription and DNA repair factor IIH (TFIIH) core complex, which is involved in general and transcription-coupled nucleotide excision repair (NER) of damaged DNA and, when complexed to TFIIK, in RNA transcription by RNA polymerase II. In NER, TFIIH acts by opening DNA around the lesion to allow the excision of the damaged oligonucleotide and its replacement by a new DNA fragment. The ATP-dependent helicase activity of XPD/rad15 is required for DNA opening. In transcription, TFIIH has an essential role in transcription initiation. When the pre-initiation complex (PIC) has been established, TFIIH is required for promoter opening and promoter escape. Phosphorylation of the C-terminal tail (CTD) of the largest subunit of RNA polymerase II by the kinase module TFIIK controls the initiation of transcription. XPD/rad15 acts by forming a bridge between TFIIK and the core-TFIIH complex. Involved in the maintenance of the fidelity of DNA replication. In Schizosaccharomyces pombe (strain 972 / ATCC 24843) (Fission yeast), this protein is General transcription and DNA repair factor IIH helicase subunit XPD.